Reading from the N-terminus, the 280-residue chain is Pantothenate synthetase (280 aa).

30–37 (MGYLHEGH) contacts ATP. The active-site Proton donor is the H37. Residue Q61 participates in (R)-pantoate binding. Beta-alanine is bound at residue Q61. Residue 147 to 150 (GKKD) participates in ATP binding. Q153 is a binding site for (R)-pantoate. ATP-binding positions include V176 and 184-187 (MSSR).

This sequence belongs to the pantothenate synthetase family. Homodimer.

Its subcellular location is the cytoplasm. The catalysed reaction is (R)-pantoate + beta-alanine + ATP = (R)-pantothenate + AMP + diphosphate + H(+). It functions in the pathway cofactor biosynthesis; (R)-pantothenate biosynthesis; (R)-pantothenate from (R)-pantoate and beta-alanine: step 1/1. Catalyzes the condensation of pantoate with beta-alanine in an ATP-dependent reaction via a pantoyl-adenylate intermediate. In Sulfurihydrogenibium sp. (strain YO3AOP1), this protein is Pantothenate synthetase.